The sequence spans 1995 residues: Myosin-14 (1995 aa).

The disordered stretch occupies residues 1–46 (MAAVTMSVPGRKAPPRPGPVPEAAQPFLFTPRGPSAGGGPGSGTSP). Alanine 2 carries the post-translational modification N-acetylalanine. The region spanning 51-101 (TARRLVWVPSELHGFEAAALRDEGEEEAEVELAESGRRLRLPRDQIQRMNP) is the Myosin N-terminal SH3-like domain. Serine 60 carries the post-translational modification Phosphoserine. Residues 105-800 (SKAEDMAELT…VLAQLEEERD (696 aa)) form the Myosin motor domain. 198 to 205 (GESGAGKT) is an ATP binding site. An actin-binding region spans residues 678-700 (LSRLMATLSNTNPSFVRCIVPNH). Residues 803–832 (VTDIIVSFQAAARGYLARRAFQKRQQQQSA) enclose the IQ domain. A coiled-coil region spans residues 862 to 1947 (LQVTRQDEVL…VTTLRNRLRR (1086 aa)). Threonine 1194 bears the Phosphothreonine mark. Disordered stretches follow at residues 1371-1415 (EEAA…RRAA), 1592-1623 (QHER…VERD), 1905-1942 (EAEE…TTLR), and 1958-1995 (RQVF…AHPQ). Residues 1930 to 1942 (SAESMNREVTTLR) show a composition bias toward polar residues. A phosphoserine mark is found at serine 1969, serine 1980, serine 1983, and serine 1989. A compositionally biased stretch (pro residues) spans 1981–1995 (GPSPEPEGSPPAHPQ).

The protein belongs to the TRAFAC class myosin-kinesin ATPase superfamily. Myosin family. In terms of assembly, myosin is a hexameric protein that consists of 2 heavy chain subunits (MHC), 2 alkali light chain subunits (MLC) and 2 regulatory light chain subunits (MLC-2). As to expression, high levels of expression are found in brain (highest in corpus callosum), heart, kidney, liver, lung, small intestine, colon and skeletal muscle. Expression is low in organs composed mainly of smooth muscle, such as aorta, uterus and urinary bladder. No detectable expression is found in thymus, spleen, placenta and lymphocytes.

Its function is as follows. Cellular myosin that appears to play a role in cytokinesis, cell shape, and specialized functions such as secretion and capping. The sequence is that of Myosin-14 (MYH14) from Homo sapiens (Human).